Reading from the N-terminus, the 946-residue chain is Calcium-transporting ATPase type 2C member 2 (946 aa).

The Cytoplasmic segment spans residues 1 to 106; it reads MVEGRVSEFL…DNSEPVWKKY (106 aa). An interaction with ORAI1 region spans residues 71–95; that stretch reads VDLHTGLSEFSVTQRRLAHGWNEFV. A helical transmembrane segment spans residues 107–127; sequence LDQFKNPLILLLLGSALVSVL. The Extracellular portion of the chain corresponds to 128–129; sequence TK. A helical membrane pass occupies residues 130–150; the sequence is EYEDAVSIATAVLVVVTVAFI. Residues 151 to 231 are Cytoplasmic-facing; the sequence is QEYRSEKSLE…EAEPCSKTDS (81 aa). Residues 232–252 traverse the membrane as a helical segment; the sequence is PLTGGGDLTTLSNIVFMGTLV. Residues 253 to 293 are Extracellular-facing; sequence QYGRGQGVVIGTGESSQFGEVFKMMQAEETPKTPLQKSMDR. Thr-264 is subject to Phosphothreonine. Ser-267 and Ser-268 each carry phosphoserine. The helical transmembrane segment at 294–314 threads the bilayer; sequence LGKQLTLFSFGIIGLIMLIGW. The Cytoplasmic portion of the chain corresponds to 315-331; it reads SQGKQLLSMFTIGVSLA. Ca(2+)-binding residues include Val-332, Ala-333, Ile-335, and Glu-337. Residues 332–352 traverse the membrane as a helical segment; the sequence is VAAIPEGLPIVVMVTLVLGVL. The Extracellular segment spans residues 353-750; sequence RMAKKRVIVK…ISALSLITLS (398 aa). Asp-379 acts as the 4-aspartylphosphate intermediate in catalysis. Residues Asp-674 and Asp-678 each coordinate Mg(2+). A helical transmembrane segment spans residues 751–771; that stretch reads TVFNLPSPLNAMQILWINIIM. Asn-768 and Asp-772 together coordinate Ca(2+). The Cytoplasmic segment spans residues 772–804; that stretch reads DGPPAQSLGVEPVDKDAFRQPPRSVRDTILSRA. The helical transmembrane segment at 805-825 threads the bilayer; sequence LILKILMSAAIIISGTLFIFW. Topologically, residues 826-837 are extracellular; that stretch reads KEMPEDRASTPR. A helical membrane pass occupies residues 838 to 855; it reads TTTMTFTCFVFFDLFNAL. At 856 to 874 the chain is on the cytoplasmic side; sequence TCRSQTKLIFEIGFLRNHM. A helical transmembrane segment spans residues 875-895; sequence FLYSVLGSILGQLAVIYIPPL. Over 896 to 905 the chain is Extracellular; the sequence is QRVFQTENLG. Residues 906-926 traverse the membrane as a helical segment; that stretch reads ALDLLFLTGLASSVFILSELL. Topologically, residues 927 to 946 are cytoplasmic; it reads KLCEKYCCSPKRVQMHPEDV.

This sequence belongs to the cation transport ATPase (P-type) (TC 3.A.3) family. Type IIA subfamily. As to quaternary structure, interacts (via N-terminus) with ORAI1 (via N- and C-termini); this interaction regulates Ca(2+) influx at the plasma membrane. As to expression, highly expressed in the gastrointestinal and respiratory tracts, prostate, thyroid, salivary, and mammary glands. Expressed in colon epithelial cells (at protein level). Expressed in brain and testis (at protein level).

The protein localises to the golgi apparatus. Its subcellular location is the trans-Golgi network membrane. It localises to the cell membrane. The protein resides in the basolateral cell membrane. The enzyme catalyses Ca(2+)(in) + ATP + H2O = Ca(2+)(out) + ADP + phosphate + H(+). It carries out the reaction Mn(2+)(in) + ATP + H2O = Mn(2+)(out) + ADP + phosphate + H(+). ATP-driven pump that supplies the Golgi apparatus with Ca(2+) and Mn(2+) ions, both essential cofactors for processing and trafficking of newly synthesized proteins in the secretory pathway. Within a catalytic cycle, acquires Ca(2+) or Mn(2+) ions on the cytoplasmic side of the membrane and delivers them to the lumenal side. The transfer of ions across the membrane is coupled to ATP hydrolysis and is associated with a transient phosphorylation that shifts the pump conformation from inward-facing to outward-facing state. Induces Ca(2+) influx independently of its ATP-driven pump function. At the basolateral membrane of mammary epithelial cells, interacts with Ca(2+) channel ORAI1 and mediates Ca(2+) entry independently of the Ca(2+) content of endoplasmic reticulum or Golgi stores. May facilitate transepithelial transport of large quantities of Ca(2+) for milk secretion via activation of Ca(2+) influx channels at the plasma membrane and active Ca(2+) transport at the Golgi apparatus. This is Calcium-transporting ATPase type 2C member 2 from Homo sapiens (Human).